Consider the following 432-residue polypeptide: 3-phosphoshikimate 1-carboxyvinyltransferase (432 aa).

K22, S23, and R27 together coordinate 3-phosphoshikimate. K22 contributes to the phosphoenolpyruvate binding site. The phosphoenolpyruvate site is built by G96 and R127. 3-phosphoshikimate is bound by residues S173, S174, Q175, S201, D316, N339, and K343. A phosphoenolpyruvate-binding site is contributed by Q175. D316 functions as the Proton acceptor in the catalytic mechanism. Residues R347, R391, and K416 each contribute to the phosphoenolpyruvate site.

This sequence belongs to the EPSP synthase family. In terms of assembly, monomer.

Its subcellular location is the cytoplasm. It carries out the reaction 3-phosphoshikimate + phosphoenolpyruvate = 5-O-(1-carboxyvinyl)-3-phosphoshikimate + phosphate. The protein operates within metabolic intermediate biosynthesis; chorismate biosynthesis; chorismate from D-erythrose 4-phosphate and phosphoenolpyruvate: step 6/7. In terms of biological role, catalyzes the transfer of the enolpyruvyl moiety of phosphoenolpyruvate (PEP) to the 5-hydroxyl of shikimate-3-phosphate (S3P) to produce enolpyruvyl shikimate-3-phosphate and inorganic phosphate. This Haemophilus influenzae (strain PittGG) protein is 3-phosphoshikimate 1-carboxyvinyltransferase.